The primary structure comprises 305 residues: Heterogeneous nuclear ribonucleoprotein A0 (305 aa).

At Met-1 the chain carries N-acetylmethionine. Residues 7 to 86 (CKLFIGGLNV…VELKRAVSRE (80 aa)) enclose the RRM 1 domain. Ser-68 carries the post-translational modification Phosphoserine. Residue Lys-80 forms a Glycyl lysine isopeptide (Lys-Gly) (interchain with G-Cter in SUMO2) linkage. Ser-84 bears the Phosphoserine; by MAPKAPK2 mark. Glycyl lysine isopeptide (Lys-Gly) (interchain with G-Cter in SUMO2) cross-links involve residues Lys-96, Lys-98, Lys-99, and Lys-106. The RRM 2 domain occupies 98–175 (KKLFVGGLKG…HRVEVKKAVP (78 aa)). An N6-acetyllysine modification is found at Lys-133. Arg-139 is subject to Omega-N-methylarginine. Residues Lys-154, Lys-159, Lys-172, and Lys-176 each participate in a glycyl lysine isopeptide (Lys-Gly) (interchain with G-Cter in SUMO2) cross-link. Disordered regions lie at residues 178–211 (DIHA…RDQN) and 265–305 (QSSY…GGSF). Composition is skewed to gly residues over residues 181 to 211 (AGGG…RDQN) and 272 to 284 (KSGG…GSWG). An Omega-N-methylarginine modification is found at Arg-286. Positions 292–305 (YRGGYGGGYGGGSF) are enriched in gly residues. Position 293 is an asymmetric dimethylarginine; alternate (Arg-293). Arg-293 carries the post-translational modification Dimethylated arginine; alternate. Arg-293 is modified (omega-N-methylarginine; alternate).

Post-translationally, phosphorylated at Ser-84 by MAPKAPK2 in response to LPS treatment, promoting stabilization of GADD45A mRNA. In terms of processing, arg-293 is dimethylated, probably to asymmetric dimethylarginine.

It localises to the nucleus. Its function is as follows. mRNA-binding component of ribonucleosomes. Specifically binds AU-rich element (ARE)-containing mRNAs. Involved in post-transcriptional regulation of cytokines mRNAs. The polypeptide is Heterogeneous nuclear ribonucleoprotein A0 (Hnrnpa0) (Mus musculus (Mouse)).